Here is a 517-residue protein sequence, read N- to C-terminus: Bifunctional purine biosynthesis protein PurH (517 aa).

Residues 1–145 (MSPLALVSVS…KNHKDVSVLV (145 aa)) form the MGS-like domain.

This sequence belongs to the PurH family.

It catalyses the reaction (6R)-10-formyltetrahydrofolate + 5-amino-1-(5-phospho-beta-D-ribosyl)imidazole-4-carboxamide = 5-formamido-1-(5-phospho-D-ribosyl)imidazole-4-carboxamide + (6S)-5,6,7,8-tetrahydrofolate. It carries out the reaction IMP + H2O = 5-formamido-1-(5-phospho-D-ribosyl)imidazole-4-carboxamide. It functions in the pathway purine metabolism; IMP biosynthesis via de novo pathway; 5-formamido-1-(5-phospho-D-ribosyl)imidazole-4-carboxamide from 5-amino-1-(5-phospho-D-ribosyl)imidazole-4-carboxamide (10-formyl THF route): step 1/1. Its pathway is purine metabolism; IMP biosynthesis via de novo pathway; IMP from 5-formamido-1-(5-phospho-D-ribosyl)imidazole-4-carboxamide: step 1/1. This is Bifunctional purine biosynthesis protein PurH from Prochlorococcus marinus subsp. pastoris (strain CCMP1986 / NIES-2087 / MED4).